The primary structure comprises 300 residues: Ribosomal RNA small subunit methyltransferase H (300 aa).

S-adenosyl-L-methionine is bound by residues 43-45, D60, D105, and Q112; that span reads AGH.

It belongs to the methyltransferase superfamily. RsmH family.

The protein resides in the cytoplasm. The enzyme catalyses cytidine(1402) in 16S rRNA + S-adenosyl-L-methionine = N(4)-methylcytidine(1402) in 16S rRNA + S-adenosyl-L-homocysteine + H(+). In terms of biological role, specifically methylates the N4 position of cytidine in position 1402 (C1402) of 16S rRNA. This chain is Ribosomal RNA small subunit methyltransferase H, found in Deinococcus deserti (strain DSM 17065 / CIP 109153 / LMG 22923 / VCD115).